We begin with the raw amino-acid sequence, 263 residues long: 4-hydroxy-tetrahydrodipicolinate reductase (263 aa).

Residues 7–12 (GFKGRM), 96–98 (GTT), and 122–125 (APNF) contribute to the NAD(+) site. Histidine 152 acts as the Proton donor/acceptor in catalysis. Residue histidine 153 participates in (S)-2,3,4,5-tetrahydrodipicolinate binding. Residue lysine 156 is the Proton donor of the active site. (S)-2,3,4,5-tetrahydrodipicolinate is bound at residue 162–163 (GT).

It belongs to the DapB family.

It localises to the cytoplasm. It carries out the reaction (S)-2,3,4,5-tetrahydrodipicolinate + NAD(+) + H2O = (2S,4S)-4-hydroxy-2,3,4,5-tetrahydrodipicolinate + NADH + H(+). The catalysed reaction is (S)-2,3,4,5-tetrahydrodipicolinate + NADP(+) + H2O = (2S,4S)-4-hydroxy-2,3,4,5-tetrahydrodipicolinate + NADPH + H(+). It functions in the pathway amino-acid biosynthesis; L-lysine biosynthesis via DAP pathway; (S)-tetrahydrodipicolinate from L-aspartate: step 4/4. Its function is as follows. Catalyzes the conversion of 4-hydroxy-tetrahydrodipicolinate (HTPA) to tetrahydrodipicolinate. This chain is 4-hydroxy-tetrahydrodipicolinate reductase, found in Listeria welshimeri serovar 6b (strain ATCC 35897 / DSM 20650 / CCUG 15529 / CIP 8149 / NCTC 11857 / SLCC 5334 / V8).